The chain runs to 200 residues: Large ribosomal subunit protein uL4 (200 aa).

The interval 43-71 (RAQKTRAEVSGSGKKPWRQKGTGRARSGD) is disordered.

It belongs to the universal ribosomal protein uL4 family. Part of the 50S ribosomal subunit.

In terms of biological role, one of the primary rRNA binding proteins, this protein initially binds near the 5'-end of the 23S rRNA. It is important during the early stages of 50S assembly. It makes multiple contacts with different domains of the 23S rRNA in the assembled 50S subunit and ribosome. Its function is as follows. Forms part of the polypeptide exit tunnel. The chain is Large ribosomal subunit protein uL4 from Pasteurella multocida (strain Pm70).